Here is a 239-residue protein sequence, read N- to C-terminus: Mannose-P-dolichol utilization defect 1 protein homolog 1 (239 aa).

The next 6 membrane-spanning stretches (helical) occupy residues Cys-25–Val-45, Leu-62–Leu-82, Phe-91–Phe-111, Ala-123–Phe-143, Leu-174–Ile-194, and Met-202–Leu-222. A PQ-loop 1 domain is found at Leu-27–Glu-93. Positions Lys-150–Gly-205 constitute a PQ-loop 2 domain.

The protein belongs to the MPDU1 (TC 2.A.43.3) family.

The protein localises to the membrane. The protein is Mannose-P-dolichol utilization defect 1 protein homolog 1 of Arabidopsis thaliana (Mouse-ear cress).